A 251-amino-acid chain; its full sequence is Cell division protein ZapD (251 aa).

The protein belongs to the ZapD family. Interacts with FtsZ.

The protein resides in the cytoplasm. Cell division factor that enhances FtsZ-ring assembly. Directly interacts with FtsZ and promotes bundling of FtsZ protofilaments, with a reduction in FtsZ GTPase activity. In Burkholderia cenocepacia (strain ATCC BAA-245 / DSM 16553 / LMG 16656 / NCTC 13227 / J2315 / CF5610) (Burkholderia cepacia (strain J2315)), this protein is Cell division protein ZapD.